The following is a 360-amino-acid chain: Snurportin-1 (360 aa).

M1 is subject to N-acetylmethionine. Positions 1–42 (MEELSQALASSFSVSQDLNSTAAPHPRLSQYKSKYSSLEQSE) are disordered. The tract at residues 1 to 65 (MEELSQALAS…LDYVNHARRL (65 aa)) is necessary for interaction with KPNB1 and m3G-cap U1 and U5 snRNP import receptor activity. The segment at 1-159 (MEELSQALAS…NRFSSLLPGG (159 aa)) is necessary for interaction with XPO1. Residues 7-22 (ALASSFSVSQDLNSTA) are compositionally biased toward polar residues. Residues 11–73 (SFSVSQDLNS…RLAEDDWTGM (63 aa)) enclose the IBB domain. The residue at position 75 (S75) is a Phosphoserine. The interaction with m3G-cap structure stretch occupies residues 127–129 (GKR). The segment at 208-328 (MHSKLPEEEG…GMKEKLTHKA (121 aa)) is necessary for binding to the m3G-cap structure. The disordered stretch occupies residues 339-360 (LSTPKLKGSSHSPDHPGCLMEN). Phosphoserine is present on S350.

This sequence belongs to the snurportin family. As to quaternary structure, component of an import snRNP complex composed of KPNB1, SNUPN, SMN1 and ZNF259. Component of a nuclear export receptor complex composed of KPNB1, Ran, SNUPN and XPO1. Found in a trimeric export complex with SNUPN, Ran and XPO1. Interacts (via IBB domain) with KPNB1; the interaction is direct. Interacts with DDX20, IPO7, SMN1, SNRPB and XPO1. Interacts directly with XPO1. Its interaction with XPO1 and binding to m3G-cap U snRNPs appears to be mutually exclusive. Can form homomers.

The protein resides in the nucleus. Its subcellular location is the cytoplasm. In terms of biological role, functions as an U snRNP-specific nuclear import adapter. Involved in the trimethylguanosine (m3G)-cap-dependent nuclear import of U snRNPs. Binds specifically to the terminal m3G-cap U snRNAs. This chain is Snurportin-1 (SNUPN), found in Homo sapiens (Human).